The primary structure comprises 250 residues: C-X-C motif chemokine 16 (250 aa).

An N-terminal signal peptide occupies residues 1-24 (MPLWELWFFLLALFLAWLTPPGNG). At 25-200 (NEGSMAGSCP…NVGATAGTSA (176 aa)) the chain is on the extracellular side. Disulfide bonds link Cys33–Cys63 and Cys35–Cys77. The tract at residues 105–186 (VAHQQHLAPQ…AKSEARENQE (82 aa)) is disordered. Polar residues-rich tracts occupy residues 128–147 (DSSTPAQTNLPSTLQPTQKP) and 163–172 (TSETDTSTVG). The helical transmembrane segment at 201–221 (LVPVLSLLVIIFLLTGVLLYV) threads the bilayer. Over 222 to 250 (MCKKRQEQSRQYPPDPQLHYVPVASNINT) the chain is Cytoplasmic.

Belongs to the intercrine alpha (chemokine CxC) family. In terms of processing, glycosylated.

The protein resides in the membrane. Functionally, induces a strong chemotactic response. Induces calcium mobilization. Binds to CXCR6/Bonzo. Also acts as a scavenger receptor on macrophages, which specifically binds to OxLDL (oxidized low density lipoprotein), suggesting that it may be involved in pathophysiology such as atherogenesis. The sequence is that of C-X-C motif chemokine 16 (CXCL16) from Sus scrofa (Pig).